A 654-amino-acid polypeptide reads, in one-letter code: MSLIHRRLYRISGLSSVNAWNLQIREAVNRNDPVESLLLFREMKRGGFEPNNFTFPFVAKACARLADVGCCEMVHAHLIKSPFWSDVFVGTATVDMFVKCNSVDYAAKVFERMPERDATTWNAMLSGFCQSGHTDKAFSLFREMRLNEITPDSVTVMTLIQSASFEKSLKLLEAMHAVGIRLGVDVQVTVANTWISTYGKCGDLDSAKLVFEAIDRGDRTVVSWNSMFKAYSVFGEAFDAFGLYCLMLREEFKPDLSTFINLAASCQNPETLTQGRLIHSHAIHLGTDQDIEAINTFISMYSKSEDTCSARLLFDIMTSRTCVSWTVMISGYAEKGDMDEALALFHAMIKSGEKPDLVTLLSLISGCGKFGSLETGKWIDARADIYGCKRDNVMICNALIDMYSKCGSIHEARDIFDNTPEKTVVTWTTMIAGYALNGIFLEALKLFSKMIDLDYKPNHITFLAVLQACAHSGSLEKGWEYFHIMKQVYNISPGLDHYSCMVDLLGRKGKLEEALELIRNMSAKPDAGIWGALLNACKIHRNVKIAEQAAESLFNLEPQMAAPYVEMANIYAAAGMWDGFARIRSIMKQRNIKKYPGESVIQVNGKNHSFTVGEHGHVENEVIYFTLNGLSLFAKDKHVLYKDVYKEQSYELFI.

Residues 1–65 constitute a mitochondrion transit peptide; that stretch reads MSLIHRRLYR…PFVAKACARL (65 aa). 13 PPR repeats span residues 86 to 116, 117 to 151, 152 to 186, 187 to 217, 220 to 254, 255 to 289, 290 to 320, 321 to 355, 356 to 390, 392 to 422, 423 to 457, 458 to 488, and 494 to 524; these read DVFV…MPER, DATT…EITP, DSVT…GVDV, QVTV…IDRG, TVVS…EFKP, DLST…GTDQ, DIEA…MTSR, TCVS…GEKP, DLVT…GCKR, NVMI…TPEK, TVVT…DYKP, NHIT…MKQV, and GLDH…MSAK. Positions 529–604 are type E motif; that stretch reads IWGALLNACK…YPGESVIQVN (76 aa). A type E(+) motif region spans residues 605–635; sequence GKNHSFTVGEHGHVENEVIYFTLNGLSLFAK.

This sequence belongs to the PPR family. PCMP-E subfamily.

The protein localises to the mitochondrion. This is Pentatricopeptide repeat-containing protein At4g19191, mitochondrial (PCMP-E1) from Arabidopsis thaliana (Mouse-ear cress).